Reading from the N-terminus, the 289-residue chain is Glucose and ribitol dehydrogenase homolog 2 (289 aa).

Positions 1–32 (MASGFPPQKQETQPGIQHVMEPTPEFSSSNYK) are disordered. 43–67 (LVTGGDSGIGKAVCHCYALEGASVA) is an NAD(+) binding site. Serine 180 contacts substrate. Tyrosine 193 serves as the catalytic Proton acceptor.

This sequence belongs to the short-chain dehydrogenases/reductases (SDR) family.

In terms of biological role, may act as a short alcohol-polyol-sugar dehydrogenase possibly related to carbohydrate metabolism and the acquisition of desiccation tolerance. May also be involved in signal transduction. This Arabidopsis thaliana (Mouse-ear cress) protein is Glucose and ribitol dehydrogenase homolog 2.